Consider the following 819-residue polypeptide: Aminopeptidase O (819 aa).

H479 serves as a coordination point for Zn(2+). The Proton acceptor role is filled by E480. H483 and E502 together coordinate Zn(2+). A Nucleolar localization signal motif is present at residues 689-699 (RRPRKRKRREK).

The protein belongs to the peptidase M1 family. Zn(2+) is required as a cofactor.

The protein localises to the nucleus. Its subcellular location is the nucleolus. The protein resides in the cytoplasm. Functionally, aminopeptidase which catalyzes the hydrolysis of amino acid residues from the N-terminus of peptide or protein substrates. In Homo sapiens (Human), this protein is Aminopeptidase O.